Reading from the N-terminus, the 309-residue chain is Glutaminase (309 aa).

Positions 65, 117, 162, 169, 193, 245, and 263 each coordinate substrate.

The protein belongs to the glutaminase family. As to quaternary structure, homotetramer.

The enzyme catalyses L-glutamine + H2O = L-glutamate + NH4(+). This is Glutaminase from Bacillus cytotoxicus (strain DSM 22905 / CIP 110041 / 391-98 / NVH 391-98).